Consider the following 799-residue polypeptide: Heat shock protein 90-6, mitochondrial (799 aa).

A mitochondrion-targeting transit peptide spans methionine 1–tyrosine 48. Low complexity predominate over residues alanine 23 to alanine 35. The segment at alanine 23–serine 61 is disordered. Positions arginine 46–serine 61 are enriched in polar residues. ATP-binding positions include glutamate 124, asparagine 128, aspartate 170, methionine 175, serine 190–glycine 191, glutamine 214–phenylalanine 219, and threonine 269. The segment at glutamate 314–lysine 337 is disordered. Residues threonine 322–glutamate 334 are compositionally biased toward basic and acidic residues. Arginine 464 is an ATP binding site. Residues serine 766–alanine 777 are compositionally biased toward polar residues. The segment at serine 766–lysine 799 is disordered. Residues threonine 784–lysine 799 show a composition bias toward acidic residues.

The protein belongs to the heat shock protein 90 family. In terms of assembly, interacts with P23-1.

The protein resides in the mitochondrion. Functionally, molecular chaperone which stabilizes unfolding protein intermediates and functions as a folding molecular chaperone that assists the non-covalent folding of proteins in an ATP-dependent manner. In Arabidopsis thaliana (Mouse-ear cress), this protein is Heat shock protein 90-6, mitochondrial.